A 324-amino-acid polypeptide reads, in one-letter code: Glyoxylate/hydroxypyruvate reductase B (324 aa).

Active-site residues include Arg-237 and Glu-266. His-285 (proton donor) is an active-site residue.

It belongs to the D-isomer specific 2-hydroxyacid dehydrogenase family. GhrB subfamily. As to quaternary structure, homodimer.

The protein resides in the cytoplasm. It catalyses the reaction glycolate + NADP(+) = glyoxylate + NADPH + H(+). The enzyme catalyses (R)-glycerate + NAD(+) = 3-hydroxypyruvate + NADH + H(+). The catalysed reaction is (R)-glycerate + NADP(+) = 3-hydroxypyruvate + NADPH + H(+). Catalyzes the NADPH-dependent reduction of glyoxylate and hydroxypyruvate into glycolate and glycerate, respectively. In Shigella flexneri, this protein is Glyoxylate/hydroxypyruvate reductase B.